We begin with the raw amino-acid sequence, 263 residues long: Neuferricin (263 aa).

A signal peptide spans 1–22 (MLRICGLGVVLSLAVAAVAVMA). A Cytochrome b5 heme-binding domain is found at 35–134 (IRLFLPEELA…KNYVFVGRLV (100 aa)). The disordered stretch occupies residues 220 to 249 (VRTTGPPSDQQDNPRHSNHGDLDNPNLEEY). The segment covering 231-241 (DNPRHSNHGDL) has biased composition (basic and acidic residues).

It belongs to the cytochrome b5 family. MAPR subfamily. As to expression, expressed in various tissues including brain, heart, adrenal gland, and kidney. In the brain, mainly expressed in pyramidal cells around the CA3 region of Ammon horn in hippocampus. Present in brain (at protein level).

The protein resides in the secreted. Its function is as follows. Heme-binding protein which promotes neuronal but not astrocyte differentiation. The sequence is that of Neuferricin from Mus musculus (Mouse).